The following is a 153-amino-acid chain: Large ribosomal subunit protein uL23m (153 aa).

Residues 131–153 (MADEQQRQGSDPQRGGVPNWFSL) form a disordered region.

It belongs to the universal ribosomal protein uL23 family. Component of the mitochondrial ribosome large subunit (39S) which comprises a 16S rRNA and about 50 distinct proteins.

It is found in the mitochondrion. The polypeptide is Large ribosomal subunit protein uL23m (MRPL23) (Otolemur garnettii (Small-eared galago)).